We begin with the raw amino-acid sequence, 481 residues long: Argininosuccinate lyase (481 aa).

This sequence belongs to the lyase 1 family. Argininosuccinate lyase subfamily.

The protein resides in the cytoplasm. The catalysed reaction is 2-(N(omega)-L-arginino)succinate = fumarate + L-arginine. The protein operates within amino-acid biosynthesis; L-arginine biosynthesis; L-arginine from L-ornithine and carbamoyl phosphate: step 3/3. This is Argininosuccinate lyase from Methanococcus maripaludis (strain C5 / ATCC BAA-1333).